A 438-amino-acid polypeptide reads, in one-letter code: GTPase Der (438 aa).

EngA-type G domains follow at residues 4–168 (PIVA…PAVP) and 176–351 (LKVA…EAAN). Residues 10–17 (GRPNVGKS), 57–61 (DTGGI), 120–123 (NKVE), 182–189 (GRPNVGKS), 229–233 (DTAGM), and 294–297 (NKWD) contribute to the GTP site. One can recognise a KH-like domain in the interval 352–436 (RRVATGTLNA…PIRLIFRRGR (85 aa)).

This sequence belongs to the TRAFAC class TrmE-Era-EngA-EngB-Septin-like GTPase superfamily. EngA (Der) GTPase family. As to quaternary structure, associates with the 50S ribosomal subunit.

In terms of biological role, GTPase that plays an essential role in the late steps of ribosome biogenesis. The sequence is that of GTPase Der from Moorella thermoacetica (strain ATCC 39073 / JCM 9320).